Reading from the N-terminus, the 257-residue chain is Zinc transporter ZupT (257 aa).

8 consecutive transmembrane segments (helical) span residues 5 to 25, 32 to 52, 61 to 81, 109 to 129, 137 to 157, 171 to 191, 195 to 215, and 236 to 256; these read LILT…GVLG, VLAF…LMEM, GMSP…YFGL, AILL…ATFV, LGFG…LAVA, IFWA…AWLI, LVSP…MVAL, and GVLC…TIGI. Fe(2+) is bound by residues Asn120 and Glu123. Residues Glu123 and His148 each coordinate Zn(2+). 3 residues coordinate Fe(2+): Asn149, Glu152, and Glu181. Residue Glu152 coordinates Zn(2+).

It belongs to the ZIP transporter (TC 2.A.5) family. ZupT subfamily.

The protein localises to the cell inner membrane. It carries out the reaction Zn(2+)(in) = Zn(2+)(out). Mediates zinc uptake. May also transport other divalent cations. This chain is Zinc transporter ZupT, found in Salmonella agona (strain SL483).